The sequence spans 166 residues: Small ribosomal subunit protein uS5 (166 aa).

The 64-residue stretch at 11-74 (LNEKLIAVNR…EKARRNMFTI (64 aa)) folds into the S5 DRBM domain.

It belongs to the universal ribosomal protein uS5 family. As to quaternary structure, part of the 30S ribosomal subunit. Contacts proteins S4 and S8.

In terms of biological role, with S4 and S12 plays an important role in translational accuracy. Its function is as follows. Located at the back of the 30S subunit body where it stabilizes the conformation of the head with respect to the body. The polypeptide is Small ribosomal subunit protein uS5 (Aliivibrio fischeri (strain ATCC 700601 / ES114) (Vibrio fischeri)).